The primary structure comprises 578 residues: ATP-dependent RNA helicase has-1 (578 aa).

The tract at residues 1-91 (MASEFSKKRK…KDAEAGDELT (91 aa)) is disordered. Residues 13–26 (DAKIATEDGAATDK) are compositionally biased toward basic and acidic residues. The span at 27–36 (KTKKVKKDKK) shows a compositional bias: basic residues. 2 stretches are compositionally biased toward acidic residues: residues 43–54 (EVVEDATPEEEN) and 77–88 (EDSDDKDAEAGD). Positions 107-135 (TDFSELNLSDKTMKAIAEMGFTKMTEIQR) match the Q motif motif. In terms of domain architecture, Helicase ATP-binding spans 138 to 313 (IPPLLAGKDV…RISLRPGPLY (176 aa)). 151-158 (AKTGSGKT) is an ATP binding site. Residues 260 to 263 (DEAD) carry the DEAD box motif. Positions 339 to 355 (KRFLLLFSFLKKMQKKK) match the Bipartite nuclear localization signal motif. In terms of domain architecture, Helicase C-terminal spans 343–497 (LLFSFLKKMQ…NVQSQLEKLI (155 aa)). A disordered region spans residues 556–578 (SMSRDKKQTSRRAYGSQPKQNRH).

Belongs to the DEAD box helicase family. DDX18/HAS1 subfamily. As to quaternary structure, associates in the nucleolus with the 60S and pre-60S ribosomal subunits.

It is found in the nucleus. The protein resides in the nucleolus. It catalyses the reaction ATP + H2O = ADP + phosphate + H(+). Its function is as follows. ATP-dependent RNA helicase involved in 40S ribosomal subunit biogenesis. Required for the processing and cleavage of 35S pre-rRNA at sites A0, A1, and A2, leading to mature 18S rRNA. The chain is ATP-dependent RNA helicase has-1 (has-1) from Neurospora crassa (strain ATCC 24698 / 74-OR23-1A / CBS 708.71 / DSM 1257 / FGSC 987).